We begin with the raw amino-acid sequence, 1109 residues long: MQRQRSILSFFQKPTAATTKGLVSGDAASGGGGSGGPRFNVKEGDAKGDASVRFAVSKSVDEVRGTDTPPEKVPRRVLPSGFKPAESAGDASSLFSNIMHKFVKVDDRDCSGERSREDVVPLNDSSLCMKANDVIPQFRSNNGKTQERNHAFSFSGRAELRSVEDIGVDGDVPGPETPGMRPRASRLKRVLEDEMTFKEDKVPVLDSNKRLKMLQDPVCGEKKEVNEGTKFEWLESSRIRDANRRRPDDPLYDRKTLHIPPDVFKKMSASQKQYWSVKSEYMDIVLFFKVGKFYELYELDAELGHKELDWKMTMSGVGKCRQVGISESGIDEAVQKLLARGYKVGRIEQLETSDQAKARGANTIIPRKLVQVLTPSTASEGNIGPDAVHLLAIKEIKMELQKCSTVYGFAFVDCAALRFWVGSISDDASCAALGALLMQVSPKEVLYDSKGLSREAQKALRKYTLTGSTAVQLAPVPQVMGDTDAAGVRNIIESNGYFKGSSESWNCAVDGLNECDVALSALGELINHLSRLKLEDVLKHGDIFPYQVYRGCLRIDGQTMVNLEIFNNSCDGGPSGTLYKYLDNCVSPTGKRLLRNWICHPLKDVESINKRLDVVEEFTANSESMQITGQYLHKLPDLERLLGRIKSSVRSSASVLPALLGKKVLKQRVKAFGQIVKGFRSGIDLLLALQKESNMMSLLYKLCKLPILVGKSGLELFLSQFEAAIDSDFPNYQNQDVTDENAETLTILIELFIERATQWSEVIHTISCLDVLRSFAIAASLSAGSMARPVIFPESEATDQNQKTKGPILKIQGLWHPFAVAADGQLPVPNDILLGEARRSSGSIHPRSLLLTGPNMGGKSTLLRATCLAVIFAQLGCYVPCESCEISLVDTIFTRLGASDRIMTGESTFLVECTETASVLQNATQDSLVILDELGRGTSTFDGYAIAYSVFRHLVEKVQCRMLFATHYHPLTKEFASHPRVTSKHMACAFKSRSDYQPRGCDQDLVFLYRLTEGACPESYGLQVALMAGIPNQVVETASGAAQAMKRSIGENFKSSELRSEFSSLHEDWLKSLVGISRVAHNNAPIGEDDYDTLFCLWHEIKSSYCVPK.

Disordered regions lie at residues 19-45 (TKGLVSGDAASGGGGSGGPRFNVKEGD) and 61-86 (DEVRGTDTPPEKVPRRVLPSGFKPAE). Over residues 61–74 (DEVRGTDTPPEKVP) the composition is skewed to basic and acidic residues. 853-860 (GPNMGGKS) lines the ATP pocket.

The protein belongs to the DNA mismatch repair MutS family. Heterodimer consisting of MSH2-MSH7 (MutS gamma).

Its subcellular location is the nucleus. Its function is as follows. Component of the post-replicative DNA mismatch repair system (MMR). Forms the heterodimer MutS gamma (MSH2-MSH7 heterodimer) which binds to DNA mismatches thereby initiating DNA repair. MutS gamma recognizes specifically the T/G single base mismatch, but not trinucleotide insertion-deletion loops (IDL). The polypeptide is DNA mismatch repair protein MSH7 (MSH7) (Arabidopsis thaliana (Mouse-ear cress)).